A 114-amino-acid chain; its full sequence is DNA-directed RNA polymerases II, IV and V subunit 9B (114 aa).

8 residues coordinate Zn(2+): cysteine 7, cysteine 10, cysteine 29, cysteine 32, cysteine 76, cysteine 79, cysteine 103, and cysteine 108. The TFIIS-type zinc finger occupies 72–113 (KAVRCAKCQHGEAVFFQATARGEEGMTLFFVCCNPNCSHRWR).

Belongs to the archaeal RpoM/eukaryotic RPA12/RPB9/RPC11 RNA polymerase family. In terms of assembly, component of the RNA polymerase II, IV and V complexes. Interacts with NRPD1.

The protein localises to the nucleus. Its subcellular location is the nucleolus. In terms of biological role, DNA-dependent RNA polymerase catalyzes the transcription of DNA into RNA using the four ribonucleoside triphosphates as substrates. Component of RNA polymerase II which synthesizes mRNA precursors and many functional non-coding RNAs. Pol II is the central component of the basal RNA polymerase II transcription machinery. It is composed of mobile elements that move relative to each other. Component of RNA polymerases IV and V which mediate short-interfering RNAs (siRNA) accumulation and subsequent RNA-directed DNA methylation-dependent (RdDM) transcriptional gene silencing (TGS) of endogenous repeated sequences, including transposable elements. Required for RNA silencing. This is DNA-directed RNA polymerases II, IV and V subunit 9B (NRPB9B) from Arabidopsis thaliana (Mouse-ear cress).